The following is a 409-amino-acid chain: Nucleoprotein (409 aa).

4 disordered regions span residues 1-32, 47-84, 121-145, and 164-194; these read MASGKAAGKSDAPTPIIKLGGPKPPKIGSSGN, PQPKFEGSGVPDNNNIKPSQQHGYWRRQARYKPGKSGR, ADTKSRSNQGTRDPDKFDQYPLRFS, and RSGRSTAASSAASSRAPSREGSRGRRSGAED. The RNA-binding stretch occupies residues 29 to 160; that stretch reads SSGNASWFQA…GNFRWDFIPL (132 aa). The CoV N NTD domain occupies 31-156; the sequence is GNASWFQAIK…GGPDGNFRWD (126 aa). The segment covering 57–68 has biased composition (polar residues); sequence PDNNNIKPSQQH. Basic residues predominate over residues 70 to 84; that stretch reads YWRRQARYKPGKSGR. Over residues 164–179 the composition is skewed to low complexity; it reads RSGRSTAASSAASSRA. The segment covering 180–192 has biased composition (basic and acidic residues); sequence PSREGSRGRRSGA. A Phosphoserine; by host modification is found at serine 190. One can recognise a CoV N CTD domain in the interval 215–331; that stretch reads TKAKADEMAH…QCVDGVGTRP (117 aa). The interval 226–333 is dimerization; that stretch reads RYCKRTIPPG…VDGVGTRPKD (108 aa). Cysteines 320 and 323 form a disulfide. The interval 326–409 is disordered; it reads GVGTRPKDDE…GDSALGENEL (84 aa). Basic residues predominate over residues 358–367; the sequence is QRPKKEKKPK. Residues 368–384 show a composition bias toward basic and acidic residues; the sequence is KQDDEVDKALTSDEERN. At threonine 378 the chain carries Phosphothreonine; by host. Residue serine 379 is modified to Phosphoserine; by host.

The protein belongs to the gammacoronavirus nucleocapsid protein family. Homooligomer. Both monomeric and oligomeric forms interact with RNA. Interacts with protein M. Interacts with NSP3; this interaction serves to tether the genome to the newly translated replicase-transcriptase complex at a very early stage of infection. Post-translationally, ADP-ribosylated. The ADP-ribosylation is retained in the virion during infection. Phosphorylated on serine and threonine residues.

Its subcellular location is the virion. It is found in the host endoplasmic reticulum-Golgi intermediate compartment. The protein resides in the host Golgi apparatus. In terms of biological role, packages the positive strand viral genome RNA into a helical ribonucleocapsid (RNP) and plays a fundamental role during virion assembly through its interactions with the viral genome and membrane protein M. Plays an important role in enhancing the efficiency of subgenomic viral RNA transcription as well as viral replication. The polypeptide is Nucleoprotein (Gallus gallus (Chicken)).